Consider the following 94-residue polypeptide: Phosphoribosyl-ATP pyrophosphatase (94 aa).

It belongs to the PRA-PH family.

It localises to the cytoplasm. It catalyses the reaction 1-(5-phospho-beta-D-ribosyl)-ATP + H2O = 1-(5-phospho-beta-D-ribosyl)-5'-AMP + diphosphate + H(+). The protein operates within amino-acid biosynthesis; L-histidine biosynthesis; L-histidine from 5-phospho-alpha-D-ribose 1-diphosphate: step 2/9. This is Phosphoribosyl-ATP pyrophosphatase from Pyrobaculum calidifontis (strain DSM 21063 / JCM 11548 / VA1).